The chain runs to 398 residues: Acetate kinase (398 aa).

Asn-8 contributes to the Mg(2+) binding site. Residue Lys-15 coordinates ATP. Substrate is bound at residue Arg-89. Asp-146 acts as the Proton donor/acceptor in catalysis. Residues 206 to 210 (HIGNG), 283 to 285 (DMR), and 331 to 335 (GMGEN) contribute to the ATP site. Glu-383 serves as a coordination point for Mg(2+).

Belongs to the acetokinase family. Homodimer. Mg(2+) is required as a cofactor. Requires Mn(2+) as cofactor.

The protein localises to the cytoplasm. The catalysed reaction is acetate + ATP = acetyl phosphate + ADP. Its pathway is metabolic intermediate biosynthesis; acetyl-CoA biosynthesis; acetyl-CoA from acetate: step 1/2. Its function is as follows. Catalyzes the formation of acetyl phosphate from acetate and ATP. Can also catalyze the reverse reaction. The sequence is that of Acetate kinase from Streptococcus pyogenes serotype M2 (strain MGAS10270).